We begin with the raw amino-acid sequence, 259 residues long: MDLLSRARKINAMLQTATGKSVNFNEMSASLRDVIRGNVYIVSRRGKLLGFAVNQEIENERMKSMLEERQFPEEYTRGLHDIRETTPNLDIESTHTVFPVENKELFKDGLTTIVPIIGGGERLGTLILGRVNESFSDDDLLLGEYGATVVGMEILHEKTEEIEMEARSKAVVQMAISSLSYSELEAIDHIFEELNGKEGLLVASKIADRVGITRSVIVNALRKLESAGVIESRSLGMKGTYIKVLNDKFLVELEKLRSR.

A GAF domain region spans residues 1 to 155 (MDLLSRARKI…GATVVGMEIL (155 aa)). Residues 203–222 (ASKIADRVGITRSVIVNALR) constitute a DNA-binding region (H-T-H motif). Serine 215 carries the post-translational modification Phosphoserine.

This sequence belongs to the CodY family.

The protein resides in the cytoplasm. Functionally, DNA-binding global transcriptional regulator which is involved in the adaptive response to starvation and acts by directly or indirectly controlling the expression of numerous genes in response to nutrient availability. During rapid exponential growth, CodY is highly active and represses genes whose products allow adaptation to nutrient depletion. In Oceanobacillus iheyensis (strain DSM 14371 / CIP 107618 / JCM 11309 / KCTC 3954 / HTE831), this protein is Global transcriptional regulator CodY.